Reading from the N-terminus, the 120-residue chain is Basic phospholipase A2 Cc2-PLA2 (120 aa).

Disulfide bonds link Cys26/Cys113, Cys28/Cys44, Cys43/Cys95, Cys49/Cys120, Cys50/Cys88, Cys57/Cys81, and Cys75/Cys86. The Ca(2+) site is built by Tyr27, Gly29, and Gly31. The active site involves His47. Asp48 contributes to the Ca(2+) binding site. Residue Asp89 is part of the active site.

Belongs to the phospholipase A2 family. Group II subfamily. D49 sub-subfamily. As to quaternary structure, monomer. Ca(2+) serves as cofactor. In terms of tissue distribution, expressed by the venom gland.

It localises to the secreted. It catalyses the reaction a 1,2-diacyl-sn-glycero-3-phosphocholine + H2O = a 1-acyl-sn-glycero-3-phosphocholine + a fatty acid + H(+). In terms of biological role, basic phospholipase A2 that inhibits ADP-, thrombin- and arachidonic acid-induced platelet aggregation. It also exhibits anticoagulant effects upon human plasma in vitro. It induces a high hemolytic activity reaching its maximum after 24 hours. It induces a marked elevation of plasmatic levels of interleukin-6 and -10, eosinophil peroxidase and complement lytic activities and it also provokes a drastic increase of lymphocytes, monocytes and neutrophils in peripheral blood accompanied by a rapid intense migration of neutrophils to the peritoneal cavity. PLA2 catalyzes the calcium-dependent hydrolysis of the 2-acyl groups in 3-sn-phosphoglycerides. The sequence is that of Basic phospholipase A2 Cc2-PLA2 from Cerastes cerastes (Horned desert viper).